Reading from the N-terminus, the 223-residue chain is ATP phosphoribosyltransferase (223 aa).

It belongs to the ATP phosphoribosyltransferase family. Short subfamily. In terms of assembly, heteromultimer composed of HisG and HisZ subunits.

Its subcellular location is the cytoplasm. It carries out the reaction 1-(5-phospho-beta-D-ribosyl)-ATP + diphosphate = 5-phospho-alpha-D-ribose 1-diphosphate + ATP. It functions in the pathway amino-acid biosynthesis; L-histidine biosynthesis; L-histidine from 5-phospho-alpha-D-ribose 1-diphosphate: step 1/9. Functionally, catalyzes the condensation of ATP and 5-phosphoribose 1-diphosphate to form N'-(5'-phosphoribosyl)-ATP (PR-ATP). Has a crucial role in the pathway because the rate of histidine biosynthesis seems to be controlled primarily by regulation of HisG enzymatic activity. The chain is ATP phosphoribosyltransferase from Bordetella bronchiseptica (strain ATCC BAA-588 / NCTC 13252 / RB50) (Alcaligenes bronchisepticus).